Consider the following 354-residue polypeptide: LAS seventeen-binding protein 5 (354 aa).

The VHS domain occupies 15–161 (TIFRIVSSRD…LGQTVKQRYS (147 aa)). Disordered regions lie at residues 160–184 (YSKSSRSRRSGGGSGGRSNFMDDSA) and 296–354 (SAQD…HNKI). Residues 296–310 (SAQDDSSDESDHGSY) show a composition bias toward basic and acidic residues.

It belongs to the LSB5 family. Interacts with SLA1 and LAS17.

The protein resides in the cytoplasm. It is found in the cell cortex. It localises to the cytoskeleton. Its function is as follows. Essential for the organization of the actin cytoskeleton, fluid phase endocytosis and vesicle trafficking, together with YSC84. The chain is LAS seventeen-binding protein 5 (LSB5) from Saccharomyces cerevisiae (strain ATCC 204508 / S288c) (Baker's yeast).